The primary structure comprises 247 residues: Carboxy-S-adenosyl-L-methionine synthase (247 aa).

S-adenosyl-L-methionine-binding positions include tyrosine 39, 89–90 (DN), 117–118 (DI), asparagine 132, and arginine 199.

The protein belongs to the class I-like SAM-binding methyltransferase superfamily. Cx-SAM synthase family. Homodimer.

It catalyses the reaction prephenate + S-adenosyl-L-methionine = carboxy-S-adenosyl-L-methionine + 3-phenylpyruvate + H2O. Functionally, catalyzes the conversion of S-adenosyl-L-methionine (SAM) to carboxy-S-adenosyl-L-methionine (Cx-SAM). The protein is Carboxy-S-adenosyl-L-methionine synthase of Sodalis glossinidius (strain morsitans).